Consider the following 89-residue polypeptide: Large ribosomal subunit protein bL27 (89 aa).

The segment at 1 to 20 (MAHKKAGGSSRNGRDSAGRR) is disordered.

Belongs to the bacterial ribosomal protein bL27 family.

This is Large ribosomal subunit protein bL27 from Jannaschia sp. (strain CCS1).